A 117-amino-acid polypeptide reads, in one-letter code: MASSAFVKFTCALVMCMMVAAPLAEAITCGLVASKLAPCIGYLQGAPGPSAACCGGIKSLNSAAASPADRKTACTCLKSAATSIKGINYGKAASLPRQCGVSVPYAISPNTNCNAIH.

The signal sequence occupies residues 1-26 (MASSAFVKFTCALVMCMMVAAPLAEA). 4 disulfides stabilise this stretch: C29-C76, C39-C53, C54-C99, and C74-C113.

The protein belongs to the plant LTP family.

Its function is as follows. Plant non-specific lipid-transfer proteins transfer phospholipids as well as galactolipids across membranes. May play a role in wax or cutin deposition in the cell walls of expanding epidermal cells and certain secretory tissues. Also has fungicide activity. This is Non-specific lipid-transfer protein (IWF1') from Beta vulgaris (Sugar beet).